The chain runs to 135 residues: U-scoloptoxin(22)-Er1a (135 aa).

Residues 1 to 24 (MAVILKHLAIILLVFVIEIKMGQG) form the signal peptide. The tract at residues 61 to 135 (PQITFSTDWG…RSPRYLPTII (75 aa)) is disordered. Over residues 75-127 (SVNEDREAAERERSPQMKRSEHEEQLMAKDEMKRFQEERNPSSDDKIAIDKRS) the composition is skewed to basic and acidic residues.

Belongs to the scoloptoxin-22 family. In terms of tissue distribution, expressed by the venom gland.

The protein localises to the secreted. The sequence is that of U-scoloptoxin(22)-Er1a from Ethmostigmus rubripes (Giant centipede).